The sequence spans 328 residues: Transcription initiation factor IIE subunit beta (328 aa).

A disordered region spans residues 32–105 (QKKTNDTVIT…SSPSKKVRPG (74 aa)). Position 52 is a phosphoserine (S52). Acidic residues predominate over residues 85 to 94 (LDDDDDDEDF). A phosphoserine mark is found at S97 and S106. A DNA-binding region (TFIIE beta) is located at residues 113–187 (QANQTDISKS…FKYLSTYDVH (75 aa)).

It belongs to the TFIIE beta subunit family. TFIIE is a tetramer of two alpha (TFA1) and two beta (TFA2) subunits.

It is found in the nucleus. Recruits TFIIH to the initiation complex and stimulates the RNA polymerase II C-terminal domain kinase and DNA-dependent ATPase activities of TFIIH. Both TFIIH and TFIIE are required for promoter clearance by RNA polymerase. The chain is Transcription initiation factor IIE subunit beta (TFA2) from Saccharomyces cerevisiae (strain ATCC 204508 / S288c) (Baker's yeast).